We begin with the raw amino-acid sequence, 301 residues long: 2-aminobenzoylacetyl-CoA thioesterase (301 aa).

Residues His-69, His-71, Asp-73, His-74, His-159, Asp-178, and His-221 each contribute to the Fe cation site.

Belongs to the metallo-beta-lactamase superfamily.

The catalysed reaction is (2-aminobenzoyl)acetyl-CoA + H2O = (2-aminobenzoyl)acetate + CoA + H(+). Thioesterase activity, but not pyocyanine production, is inhibited by 2-(pyridin-3-yl)benzoic acid, 2-(1H-pyrrol-1-yl)benzoic acid and 3-methylthiophene-2-carboxylic acid. Compounds bind to the active center. Its function is as follows. Required for the biosynthesis of the quorum-sensing signaling molecules 2-heptyl-4(1H)-quinolone (HHQ) and 2-heptyl-3-hydroxy-4(1H)-quinolone (Pseudomonas quinolone signal or PQS), which are important for biofilm formation and virulence. Catalyzes the hydrolysis of the intermediate 2-aminobenzoylacetyl-CoA (2-ABA-CoA) to form 2-aminobenzoylacetate (2-ABA), the precursor of HHQ. In vitro, can also hydrolyze other substrates such as S-ethyl-acetothioacetate and acetoacetyl-CoA, but is inactive against anthraniloyl-CoA, malonyl-CoA and octanoyl-CoA. Beyond its thioesterase function, is involved in the regulation of diverse genes coding for key virulence determinants and biofilm development. The polypeptide is 2-aminobenzoylacetyl-CoA thioesterase (Pseudomonas aeruginosa (strain ATCC 15692 / DSM 22644 / CIP 104116 / JCM 14847 / LMG 12228 / 1C / PRS 101 / PAO1)).